The chain runs to 488 residues: Beta-amylase (488 aa).

The substrate site is built by D51, H91, and D99. E184 serves as the catalytic Proton donor. K293, H298, and T340 together coordinate substrate. Residue E378 is the Proton acceptor of the active site. Substrate-binding positions include 379–380 (NA) and R418.

It belongs to the glycosyl hydrolase 14 family.

The catalysed reaction is Hydrolysis of (1-&gt;4)-alpha-D-glucosidic linkages in polysaccharides so as to remove successive maltose units from the non-reducing ends of the chains.. This is Beta-amylase (BMY1) from Zea mays (Maize).